The chain runs to 30 residues: Bacteriocin SRCAM 37 (30 aa).

It belongs to the bacteriocin class IIA/YGNGV family.

It is found in the secreted. Its function is as follows. Bacteriocin with antibacterial activity against C.jejuni. The polypeptide is Bacteriocin SRCAM 37 (Paenibacillus polymyxa (Bacillus polymyxa)).